Consider the following 320-residue polypeptide: MSTSSAQYSPDLVRAYLQEIGRVRLLTAEEELCFGRQVQRLMMLLDAQTELRDRLGHEPSKEEWAAAVDLNLEDLDRQIEQGQRAKRKMIEANLRLVVSIAKKYQKRHMEFLDLIQEGTLGLERGVEKFDPSKGYKFSTYAYWWIRQAITRAIAQQSRTIRLPIHITEKLNKLKKTQRELSQQLGRSATASELAEVLELPLEQVREYIQMNRQPVSLDVKVGDSQDTELQELLEDEQSSPSDYVEQESLRRDLRNLMAELTPQQQAVIALRYGLDEGDSLSLAKVGERLNISRERVRKLERQAMDHLRRRSRLLAEYAAS.

Residues 89–159 are sigma-70 factor domain-2; sequence MIEANLRLVV…TRAIAQQSRT (71 aa). The Interaction with polymerase core subunit RpoC motif lies at 113–116; it reads DLIQ. The segment at 168 to 243 is sigma-70 factor domain-3; sequence EKLNKLKKTQ…EDEQSSPSDY (76 aa). Residues 256-310 are sigma-70 factor domain-4; the sequence is LMAELTPQQQAVIALRYGLDEGDSLSLAKVGERLNISRERVRKLERQAMDHLRRR. The H-T-H motif DNA-binding region spans 282–301; it reads LAKVGERLNISRERVRKLER.

It belongs to the sigma-70 factor family.

Its subcellular location is the cytoplasm. Its function is as follows. Sigma factors are initiation factors that promote the attachment of RNA polymerase to specific initiation sites and are then released. This sigma factor is a component of the biological clock pathway that affects the circadian expression of a subset of genes in this bacterium. The polypeptide is RNA polymerase sigma factor SigA2 (sigA2) (Synechococcus elongatus (strain ATCC 33912 / PCC 7942 / FACHB-805) (Anacystis nidulans R2)).